A 163-amino-acid polypeptide reads, in one-letter code: 2-C-methyl-D-erythritol 2,4-cyclodiphosphate synthase (163 aa).

A divalent metal cation is bound by residues Asp15 and His17. 4-CDP-2-C-methyl-D-erythritol 2-phosphate contacts are provided by residues 15–17 (DFH) and 41–42 (HS). His49 provides a ligand contact to a divalent metal cation. 4-CDP-2-C-methyl-D-erythritol 2-phosphate is bound by residues 63–65 (DIG) and 139–142 (TTNE).

Belongs to the IspF family. Homotrimer. A divalent metal cation is required as a cofactor.

The enzyme catalyses 4-CDP-2-C-methyl-D-erythritol 2-phosphate = 2-C-methyl-D-erythritol 2,4-cyclic diphosphate + CMP. It participates in isoprenoid biosynthesis; isopentenyl diphosphate biosynthesis via DXP pathway; isopentenyl diphosphate from 1-deoxy-D-xylulose 5-phosphate: step 4/6. Involved in the biosynthesis of isopentenyl diphosphate (IPP) and dimethylallyl diphosphate (DMAPP), two major building blocks of isoprenoid compounds. Catalyzes the conversion of 4-diphosphocytidyl-2-C-methyl-D-erythritol 2-phosphate (CDP-ME2P) to 2-C-methyl-D-erythritol 2,4-cyclodiphosphate (ME-CPP) with a corresponding release of cytidine 5-monophosphate (CMP). This is 2-C-methyl-D-erythritol 2,4-cyclodiphosphate synthase from Gloeobacter violaceus (strain ATCC 29082 / PCC 7421).